The primary structure comprises 303 residues: Small ribosomal subunit protein uS2 (303 aa).

A disordered region spans residues 258–303 (ATLRENAVVTENEVKKTDEEEGASSEAARADAQNEEAVAKPGEEVE). Basic and acidic residues predominate over residues 294-303 (AVAKPGEEVE).

It belongs to the universal ribosomal protein uS2 family.

This is Small ribosomal subunit protein uS2 from Bifidobacterium animalis subsp. lactis (strain AD011).